A 139-amino-acid chain; its full sequence is uncharacterized protein (139 aa).

In terms of domain architecture, HIT spans 5-114; sequence IFCKIINKEL…IPRFKNDGFG (110 aa). The short motif at 99 to 103 is the Histidine triad motif element; sequence HTHFH.

This is an uncharacterized protein from Borreliella burgdorferi (strain ATCC 35210 / DSM 4680 / CIP 102532 / B31) (Borrelia burgdorferi).